Consider the following 155-residue polypeptide: Reticulon-like protein B23 (155 aa).

Residues 1 to 155 (MGEMGKAIGL…LNRRNGEILD (155 aa)) form the Reticulon domain. A run of 2 helical transmembrane segments spans residues 30-50 (SLISDVLIVLLSSLAILGLLF) and 117-137 (IISGVTIAYAGLCLFCLSMLF).

It localises to the endoplasmic reticulum membrane. The sequence is that of Reticulon-like protein B23 (RTNLB23) from Arabidopsis thaliana (Mouse-ear cress).